A 353-amino-acid chain; its full sequence is N-acetyl-gamma-glutamyl-phosphate reductase (353 aa).

Cysteine 157 is a catalytic residue.

Belongs to the NAGSA dehydrogenase family. Type 1 subfamily.

It is found in the cytoplasm. The enzyme catalyses N-acetyl-L-glutamate 5-semialdehyde + phosphate + NADP(+) = N-acetyl-L-glutamyl 5-phosphate + NADPH + H(+). It participates in amino-acid biosynthesis; L-arginine biosynthesis; N(2)-acetyl-L-ornithine from L-glutamate: step 3/4. Its function is as follows. Catalyzes the NADPH-dependent reduction of N-acetyl-5-glutamyl phosphate to yield N-acetyl-L-glutamate 5-semialdehyde. The sequence is that of N-acetyl-gamma-glutamyl-phosphate reductase from Bordetella avium (strain 197N).